A 160-amino-acid chain; its full sequence is Class II hydrophobin 8 (160 aa).

Disulfide bonds link Cys92–Cys141, Cys102–Cys132, Cys103–Cys115, and Cys142–Cys153.

This sequence belongs to the cerato-ulmin hydrophobin family. In terms of assembly, homodimer. Homodimers further self-assemble to form highly ordered films at water-air interfaces through intermolecular interactions.

The protein resides in the secreted. It is found in the cell wall. Functionally, aerial growth, conidiation, and dispersal of filamentous fungi in the environment rely upon a capability of their secreting small amphipathic proteins called hydrophobins (HPBs) with low sequence identity. Class I can self-assemble into an outermost layer of rodlet bundles on aerial cell surfaces, conferring cellular hydrophobicity that supports fungal growth, development and dispersal; whereas Class II form highly ordered films at water-air interfaces through intermolecular interactions but contribute nothing to the rodlet structure. This chain is Class II hydrophobin 8, found in Trichoderma asperellum (strain ATCC 204424 / CBS 433.97 / NBRC 101777).